A 666-amino-acid polypeptide reads, in one-letter code: Probable potassium transport system protein Kup (666 aa).

A run of 12 helical transmembrane segments spans residues 16-36 (GFIIALGIVYGDIGTSPLYTM), 58-78 (ISLIIWTLTLITTIKYVLIAL), 100-120 (PWLIIPAMIGGATLLSDGALT), 141-161 (IYQNQTNVIITTLVILIVLFG), 165-185 (FGTGFIGKIFGPVMFIWFSFL), 221-241 (IFILGSIFLATTGAEALYSDL), 253-273 (WPFVKMCIVLSYCGQAAWILA), 292-312 (LTVYVVILATLAAIIASQALI), 343-363 (LYIPVINWILFAVTSCTVLYF), 373-393 (YGLAITITMLMTTILLNYYLI), 399-419 (PFLAHLVMTFFALVEFIFFWA), and 424-444 (FMHGGYVVVILALAIVFVMFI).

The protein belongs to the HAK/KUP transporter (TC 2.A.72) family.

The protein resides in the cell membrane. The catalysed reaction is K(+)(in) + H(+)(in) = K(+)(out) + H(+)(out). Its function is as follows. Transport of potassium into the cell. Likely operates as a K(+):H(+) symporter. In Streptococcus pyogenes serotype M5 (strain Manfredo), this protein is Probable potassium transport system protein Kup.